Reading from the N-terminus, the 478-residue chain is Glycogen synthase (478 aa).

ADP-alpha-D-glucose is bound at residue Lys16.

This sequence belongs to the glycosyltransferase 1 family. Bacterial/plant glycogen synthase subfamily.

The enzyme catalyses [(1-&gt;4)-alpha-D-glucosyl](n) + ADP-alpha-D-glucose = [(1-&gt;4)-alpha-D-glucosyl](n+1) + ADP + H(+). It functions in the pathway glycan biosynthesis; glycogen biosynthesis. Synthesizes alpha-1,4-glucan chains using ADP-glucose. The protein is Glycogen synthase of Lachnospira eligens (strain ATCC 27750 / DSM 3376 / VPI C15-48 / C15-B4) (Eubacterium eligens).